We begin with the raw amino-acid sequence, 125 residues long: Small ribosomal subunit protein uS13 (125 aa).

Belongs to the universal ribosomal protein uS13 family. As to quaternary structure, part of the 30S ribosomal subunit. Forms a loose heterodimer with protein S19. Forms two bridges to the 50S subunit in the 70S ribosome.

Its function is as follows. Located at the top of the head of the 30S subunit, it contacts several helices of the 16S rRNA. In the 70S ribosome it contacts the 23S rRNA (bridge B1a) and protein L5 of the 50S subunit (bridge B1b), connecting the 2 subunits; these bridges are implicated in subunit movement. Contacts the tRNAs in the A and P-sites. This is Small ribosomal subunit protein uS13 from Rickettsia prowazekii (strain Madrid E).